Reading from the N-terminus, the 598-residue chain is MNKKKIFGFSRIVLVWILFFSGSSLLLGRLFYLQVMKGSWLTNKAKNQQTIILNTFQPRRTICDRNGIPLAIDTLAYDIFAHPLHFKKSTFDIANELYSILNLDVEYLQNLFIKNTTGICIAHQAPEQIANQIIAKNIEGIELVQHPKRYYPYKQLCADVIGYVNTLHEGQAGLELSCQESLQLQSPEVVSAIDGRGFLINDGIPRELFKQDSLCLQLTIDLDLQKASYLAIYDGIKKCNAKRGTVIILDPYTGAILALVTAPSYDPNVYYDFPIERFKNWPVIDLYEPGSTFKPINMAIALEAKAIKKNDFFYDEGCIQISDTIITNNNYYNKQFACDKNSHLNITDVLSNSSNVGMVHILQRLAPEIYYQWIQKLGLGNNVFLETDFPLSSYSSLKNILEFTSYNIESAVTSFGQGLAMTPIKLAQLYACLSNGGNIIRPYIVDGLFDIQNEKLFTLNNNIFDQNISLKRKLLKTKVFSPSTTEIVLDMLEEVIFNGTGSSCFLPGYRIGGKTGTSQKHAEQGGYSTKHILTSFAAIFPINNPQYVILSVIDEPSIPLSFGSNTAGPVVRSIIESLIRIKKIPPSIPTLTHHYYCK.

A helical membrane pass occupies residues I12 to L33. The Acyl-ester intermediate role is filled by S291.

Belongs to the transpeptidase family.

Its subcellular location is the plastid. It localises to the chloroplast membrane. It catalyses the reaction Preferential cleavage: (Ac)2-L-Lys-D-Ala-|-D-Ala. Also transpeptidation of peptidyl-alanyl moieties that are N-acyl substituents of D-alanine.. This is Peptidoglycan D,D-transpeptidase FtsI homolog (ftsI) from Mesostigma viride (Green alga).